A 697-amino-acid polypeptide reads, in one-letter code: uncharacterized protein (697 aa).

A run of 5 helical transmembrane segments spans residues 45 to 65 (LCAV…LALL), 86 to 106 (TVAA…MGVV), 128 to 148 (VVVS…GMLA), 198 to 218 (VLLG…WWAL), and 280 to 300 (HLAI…ILAG). 2 consecutive ABC transporter domains span residues 251 to 473 (VRLD…QPQH) and 477 to 696 (LELV…AGGM). Residues 285–292 (GANGSGKT) and 514–521 (GGNGSGKS) contribute to the ATP site. The helical transmembrane segment at 522-542 (TLAWIMAGLTIPTTGACLLDG) threads the bilayer.

It belongs to the ABC transporter superfamily.

It localises to the cell membrane. This is an uncharacterized protein from Mycobacterium tuberculosis (strain CDC 1551 / Oshkosh).